The primary structure comprises 485 residues: E3 ubiquitin-protein ligase RNF14 (485 aa).

The 127-residue stretch at 11-137 (DELLALASIY…QFLKEETLTY (127 aa)) folds into the RWD domain. The D-box motif lies at 37–45 (RIYLDLPQN). A TRIAD supradomain region spans residues 217–458 (KLFLCSICFC…DSESPCFNRL (242 aa)). Zn(2+) contacts are provided by cysteine 221, cysteine 224, cysteine 239, histidine 241, cysteine 244, cysteine 247, cysteine 266, cysteine 271, cysteine 310, cysteine 315, cysteine 330, cysteine 333, cysteine 338, cysteine 341, and histidine 346. The RING-type 1 zinc finger occupies 221–271 (CSICFCEKLGSDCMYFLECKHVYCKACLKDYFEIQIKDGQVKCLNCPEPQC). The IBR-type zinc finger occupies 290-351 (ARYDRLLLQS…RLTYHGLSPC (62 aa)). Serine 349 bears the Phosphoserine mark. Zn(2+)-binding residues include cysteine 351, cysteine 405, and cysteine 408. Residues 405 to 434 (CPCCGTPIQKLDGCNKMTCTGCMQYFCWIC) form an RING-type 2; atypical zinc finger. Residue cysteine 418 is part of the active site. Residues cysteine 423, cysteine 426, cysteine 431, cysteine 434, histidine 446, and cysteine 454 each coordinate Zn(2+).

The protein belongs to the RBR family. RNF14 subfamily. In terms of assembly, interacts with GCN1; interaction takes place in response to ribosome collisions and is required for ubiquitination of EEF1A1/eEF1A. Interacts with the ubiquitin-conjugating enzymes UBE2E1 and UBE2E2. Interacts with AR/androgen receptor. Interacts with TCF7/TCF1, TCF7L1/TCF3 and TCF7L2/TCF4; promoting Wnt signaling. In terms of processing, RING-type zinc finger-dependent and UBE2E2-dependent autoubiquitination.

It localises to the cytoplasm. It is found in the nucleus. It catalyses the reaction [E2 ubiquitin-conjugating enzyme]-S-ubiquitinyl-L-cysteine + [acceptor protein]-L-lysine = [E2 ubiquitin-conjugating enzyme]-L-cysteine + [acceptor protein]-N(6)-ubiquitinyl-L-lysine.. Its pathway is protein modification; protein ubiquitination. In terms of biological role, E3 ubiquitin-protein ligase that plays a key role in the RNF14-RNF25 translation quality control pathway, a pathway that takes place when a ribosome has stalled during translation, and which promotes ubiquitination and degradation of translation factors on stalled ribosomes. Recruited to stalled ribosomes by the ribosome collision sensor GCN1 and mediates 'Lys-6'-linked ubiquitination of target proteins, leading to their degradation. Mediates ubiquitination of EEF1A1/eEF1A and ETF1/eRF1 translation factors on stalled ribosomes, leading to their degradation. Also catalyzes ubiquitination of ribosomal proteins RPL0, RPL1, RPL12, RPS13 and RPS17. Specifically required to resolve RNA-protein cross-links caused by reactive aldehydes, which trigger translation stress by stalling ribosomes: acts by catalying 'Lys-6'-linked ubiquitination of RNA-protein cross-links, leading to their removal by the ATP-dependent unfoldase VCP and subsequent degradation by the proteasome. Independently of its function in the response to stalled ribosomes, acts as a regulator of transcription in Wnt signaling via its interaction with TCF transcription factors (TCF7/TCF1, TCF7L1/TCF3 and TCF7L2/TCF4). May also play a role as a coactivator for androgen- and, to a lesser extent, progesterone-dependent transcription. The polypeptide is E3 ubiquitin-protein ligase RNF14 (Mus musculus (Mouse)).